A 364-amino-acid polypeptide reads, in one-letter code: Protein BRI1-5 ENHANCED 1 (364 aa).

The segment covering 1–11 (MVREEQEEDDN) has biased composition (acidic residues). Residues 1–22 (MVREEQEEDDNNNNNNGGGERK) are disordered. Residues 44–49 (GGSGFV), arginine 69, 98–99 (DL), tyrosine 202, lysine 206, valine 232, and serine 244 each bind NADP(+). The Proton donor role is filled by lysine 206.

Belongs to the NAD(P)-dependent epimerase/dehydratase family. As to quaternary structure, monomer. In terms of tissue distribution, mainly present in cell elongating-containing tissues. Strongly expressed in roots and flowers, also observed in petioles, stems, leaves and siliques.

The protein localises to the cytoplasm. It functions in the pathway plant hormone biosynthesis; brassinosteroid biosynthesis. Element of the brassinosteroid metabolic pathway that regulates typhasterol (TY), castasterone (CS) and brassinolide (BL) levels. Involved in the control of organ elongation. This chain is Protein BRI1-5 ENHANCED 1, found in Arabidopsis thaliana (Mouse-ear cress).